The chain runs to 546 residues: CTP synthase (546 aa).

The amidoligase domain stretch occupies residues 1-269 (MNPNTKIIFV…DAKLVELLNL (269 aa)). S16 is a binding site for CTP. S16 provides a ligand contact to UTP. ATP contacts are provided by residues 17 to 22 (SLGKGV) and D74. D74 and E143 together coordinate Mg(2+). CTP contacts are provided by residues 150–152 (DIE), 190–195 (KTKPTQ), and K226. UTP is bound by residues 190–195 (KTKPTQ) and K226. The Glutamine amidotransferase type-1 domain occupies 294 to 546 (TIAMVGKYVS…IHAAVEKSNK (253 aa)). G356 contributes to the L-glutamine binding site. C383 acts as the Nucleophile; for glutamine hydrolysis in catalysis. L-glutamine contacts are provided by residues 384–387 (LGMQ), E407, and R474. Residues H519 and E521 contribute to the active site.

It belongs to the CTP synthase family. In terms of assembly, homotetramer.

It catalyses the reaction UTP + L-glutamine + ATP + H2O = CTP + L-glutamate + ADP + phosphate + 2 H(+). The catalysed reaction is L-glutamine + H2O = L-glutamate + NH4(+). It carries out the reaction UTP + NH4(+) + ATP = CTP + ADP + phosphate + 2 H(+). It functions in the pathway pyrimidine metabolism; CTP biosynthesis via de novo pathway; CTP from UDP: step 2/2. Its activity is regulated as follows. Allosterically activated by GTP, when glutamine is the substrate; GTP has no effect on the reaction when ammonia is the substrate. The allosteric effector GTP functions by stabilizing the protein conformation that binds the tetrahedral intermediate(s) formed during glutamine hydrolysis. Inhibited by the product CTP, via allosteric rather than competitive inhibition. Its function is as follows. Catalyzes the ATP-dependent amination of UTP to CTP with either L-glutamine or ammonia as the source of nitrogen. Regulates intracellular CTP levels through interactions with the four ribonucleotide triphosphates. The protein is CTP synthase of Francisella philomiragia subsp. philomiragia (strain ATCC 25017 / CCUG 19701 / FSC 153 / O#319-036).